Consider the following 158-residue polypeptide: Endoribonuclease YbeY (158 aa).

The Zn(2+) site is built by histidine 118, histidine 122, and histidine 128.

Belongs to the endoribonuclease YbeY family. The cofactor is Zn(2+).

It localises to the cytoplasm. Single strand-specific metallo-endoribonuclease involved in late-stage 70S ribosome quality control and in maturation of the 3' terminus of the 16S rRNA. The polypeptide is Endoribonuclease YbeY (Alteromonas mediterranea (strain DSM 17117 / CIP 110805 / LMG 28347 / Deep ecotype)).